A 645-amino-acid chain; its full sequence is Alkyldihydroxyacetonephosphate synthase, peroxisomal (645 aa).

Low complexity predominate over residues 1-10; it reads MAEAAAGEAG. A peroxisome-targeting transit peptide spans 1–45; sequence MAEAAAGEAGASERDPDAGRARRRLRVLSGHLLGRPQEAPSTNEC. Residues 1–72 form a disordered region; that stretch reads MAEAAAGEAG…AAPESGTIPK (72 aa). The segment covering 11 to 20 has biased composition (basic and acidic residues); the sequence is ASERDPDAGR. Positions 50-69 are enriched in low complexity; sequence AASAAGASPAATPAAPESGT. Phosphoserine occurs at positions 52 and 57. Thr61 is modified (phosphothreonine). At Lys89 the chain carries N6-acetyllysine. One can recognise an FAD-binding PCMH-type domain in the interval 189–371; it reads FERIPDIVVW…TEATIKIRPT (183 aa). Residues 221-227, 290-296, and 303-306 each bind FAD; these read PIGGGTS, DSLEFST, and TRAS. Lys334 carries the post-translational modification N6-acetyllysine. 355–361 is an FAD binding site; it reads EGTLGVI. Arg502 provides a ligand contact to substrate. Tyr565 functions as the Proton donor/acceptor in the catalytic mechanism. Important for enzyme activity stretches follow at residues 602 to 604 and 641 to 645; these read HHH and NRNLL.

This sequence belongs to the FAD-binding oxidoreductase/transferase type 4 family. Homodimer. FAD serves as cofactor.

It is found in the peroxisome membrane. Its subcellular location is the peroxisome. It carries out the reaction a long chain fatty alcohol + a 1-acylglycerone 3-phosphate = a 1-O-alkylglycerone 3-phosphate + a long-chain fatty acid + H(+). The enzyme catalyses hexadecan-1-ol + 1-hexadecanoylglycerone 3-phosphate = 1-O-hexadecylglycerone 3-phosphate + hexadecanoate + H(+). The catalysed reaction is 1-hexadecanoylglycerone 3-phosphate + a long-chain fatty acid = a 1-acylglycerone 3-phosphate + hexadecanoate. The protein operates within glycerolipid metabolism; ether lipid biosynthesis. Its function is as follows. Catalyzes the exchange of the acyl chain in acyl-dihydroxyacetonephosphate (acyl-DHAP) for a long chain fatty alcohol, yielding the first ether linked intermediate, i.e. alkyl-dihydroxyacetonephosphate (alkyl-DHAP), in the pathway of ether lipid biosynthesis. The chain is Alkyldihydroxyacetonephosphate synthase, peroxisomal (Agps) from Mus musculus (Mouse).